The sequence spans 206 residues: uncharacterized protein (206 aa).

Disordered stretches follow at residues 64–123 and 155–206; these read NTES…DPSL and VTTP…SSGG. The span at 66–79 shows a compositional bias: polar residues; it reads ESTQKTATTQQQGL. A compositionally biased stretch (low complexity) spans 97–107; it reads AENNAQANQSE. Residues 108-118 are compositionally biased toward basic and acidic residues; sequence NRAESTTKAES. Positions 155-167 are enriched in low complexity; it reads VTTPTGQVVQPQT. Polar residues predominate over residues 182–198; the sequence is GSMNSKPVSRGGFSSPN.

This is an uncharacterized protein from Haemophilus influenzae (strain ATCC 51907 / DSM 11121 / KW20 / Rd).